The primary structure comprises 394 residues: MKGICILGSTGSIGVSTLDVLARHPDRYRVVALSANGNVDRLFEQCRAHRPRYAAVIRAEAAACLRERLMAAGLGGIEVLAGPEALEQIASLPEVDSVMAAIVGAAGLLPTLAAARAGKDVLLANKEALVMSGPLFMAEVARSGARLLPIDSEHNAVFQCMPAAYRAGSRAVGVRRILLTASGGPFLHTPLAELETVTPEQAVAHPNWVMGRKISVDSATMMNKGLEVIEACLLFNAKPDDVQVVVHRQSVIHSMVDYVDGTVLAQMGTPDMRIPIAHALAWPDRFESGAESLDLFAVRQLNFERPDLARFPCLRLAYEAVGAGGTAPAILNAANETAVAAFLDRRLAFTGIPRVIEHCMARVAPNAADAIESVLQADAETRKVAQKYIDDLRV.

Threonine 10, glycine 11, serine 12, isoleucine 13, asparagine 38, and asparagine 125 together coordinate NADPH. Position 126 (lysine 126) interacts with 1-deoxy-D-xylulose 5-phosphate. Glutamate 127 contacts NADPH. Mn(2+) is bound at residue aspartate 151. Positions 152, 153, 182, and 205 each coordinate 1-deoxy-D-xylulose 5-phosphate. Glutamate 153 is a binding site for Mn(2+). Residue glycine 211 coordinates NADPH. 1-deoxy-D-xylulose 5-phosphate-binding residues include serine 218, asparagine 223, lysine 224, and glutamate 227. Glutamate 227 serves as a coordination point for Mn(2+).

It belongs to the DXR family. Mg(2+) is required as a cofactor. Mn(2+) serves as cofactor.

The enzyme catalyses 2-C-methyl-D-erythritol 4-phosphate + NADP(+) = 1-deoxy-D-xylulose 5-phosphate + NADPH + H(+). Its pathway is isoprenoid biosynthesis; isopentenyl diphosphate biosynthesis via DXP pathway; isopentenyl diphosphate from 1-deoxy-D-xylulose 5-phosphate: step 1/6. Functionally, catalyzes the NADPH-dependent rearrangement and reduction of 1-deoxy-D-xylulose-5-phosphate (DXP) to 2-C-methyl-D-erythritol 4-phosphate (MEP). The sequence is that of 1-deoxy-D-xylulose 5-phosphate reductoisomerase from Methylococcus capsulatus (strain ATCC 33009 / NCIMB 11132 / Bath).